We begin with the raw amino-acid sequence, 219 residues long: Protein matrimony (219 aa).

The span at Pro74 to Gln99 shows a compositional bias: basic residues. The segment at Pro74–Pro104 is disordered. An SAM domain is found at Asn159–Leu219.

As to quaternary structure, interacts with polo. Interacts with cort. Post-translationally, probably ubiquitinated: degraded during the oocyte-to-embryo transition by the anaphase promoting complex/cyclosome (APC/C) containing cort protein.

It is found in the nucleus. It localises to the chromosome. Polo kinase inhibitor required to maintain G2 arrest in the meiotic cell cycle in females. Holds heterochromatically paired homologs together from the end of pachytene until metaphase I. Haploinsufficient locus for homologous achiasmate segregation and may be required for the maintenance of heterochromatic pairings. This chain is Protein matrimony (mtrm), found in Drosophila yakuba (Fruit fly).